Consider the following 206-residue polypeptide: Large ribosomal subunit protein uL4 (206 aa).

The interval Thr48 to Gln75 is disordered.

Belongs to the universal ribosomal protein uL4 family. In terms of assembly, part of the 50S ribosomal subunit.

Its function is as follows. One of the primary rRNA binding proteins, this protein initially binds near the 5'-end of the 23S rRNA. It is important during the early stages of 50S assembly. It makes multiple contacts with different domains of the 23S rRNA in the assembled 50S subunit and ribosome. Functionally, forms part of the polypeptide exit tunnel. The chain is Large ribosomal subunit protein uL4 from Clostridium botulinum (strain Loch Maree / Type A3).